Here is a 491-residue protein sequence, read N- to C-terminus: Chromosomal replication initiator protein DnaA (491 aa).

The interval methionine 1–leucine 69 is domain I, interacts with DnaA modulators. The segment at leucine 69–leucine 154 is domain II. Residues proline 155–serine 371 form a domain III, AAA+ region region. ATP contacts are provided by glycine 199, glycine 201, lysine 202, and threonine 203. The domain IV, binds dsDNA stretch occupies residues lysine 372–arginine 491.

This sequence belongs to the DnaA family. As to quaternary structure, oligomerizes as a right-handed, spiral filament on DNA at oriC.

The protein localises to the cytoplasm. In terms of biological role, plays an essential role in the initiation and regulation of chromosomal replication. ATP-DnaA binds to the origin of replication (oriC) to initiate formation of the DNA replication initiation complex once per cell cycle. Binds the DnaA box (a 9 base pair repeat at the origin) and separates the double-stranded (ds)DNA. Forms a right-handed helical filament on oriC DNA; dsDNA binds to the exterior of the filament while single-stranded (ss)DNA is stabiized in the filament's interior. The ATP-DnaA-oriC complex binds and stabilizes one strand of the AT-rich DNA unwinding element (DUE), permitting loading of DNA polymerase. After initiation quickly degrades to an ADP-DnaA complex that is not apt for DNA replication. Binds acidic phospholipids. The sequence is that of Chromosomal replication initiator protein DnaA from Francisella tularensis subsp. holarctica (strain FTNF002-00 / FTA).